Reading from the N-terminus, the 51-residue chain is Large ribosomal subunit protein bL33 (51 aa).

The tract at residues 1-21 (MRDKIKLESSAGTGHFYTTTK) is disordered. Over residues 10 to 20 (SAGTGHFYTTT) the composition is skewed to polar residues.

It belongs to the bacterial ribosomal protein bL33 family.

The sequence is that of Large ribosomal subunit protein bL33 (rpmG) from Neisseria meningitidis serogroup A / serotype 4A (strain DSM 15465 / Z2491).